Consider the following 169-residue polypeptide: Interleukin-36 gamma (169 aa).

Residues 1–17 constitute a propeptide that is removed on maturation; that stretch reads MRGTPGDADGGGRAVYQ.

The protein belongs to the IL-1 family. In terms of assembly, interacts with cargo receptor TMED10; the interaction mediates the translocation from the cytoplasm into the ERGIC (endoplasmic reticulum-Golgi intermediate compartment) and thereby secretion. Post-translationally, N-terminal truncation leads to a dramatic enhancement of its activity (&gt;1000-fold). Proteolytically cleaved by cathepsin CTSG. Highly expressed in tissues containing epithelial cells: skin, lung, stomach and esophagus. Expressed in bronchial epithelial. In skin is expressed only in keratinocytes but not in fibroblasts, endothelial cells or melanocytes. Up-regulated in lesional psoriasis skin. Expressed in monocyte-derived dendritic cells and M1 macrophages.

Its subcellular location is the cytoplasm. It localises to the secreted. Its function is as follows. Cytokine that binds to and signals through the IL1RL2/IL-36R receptor which in turn activates NF-kappa-B and MAPK signaling pathways in target cells. Part of the IL-36 signaling system that is thought to be present in epithelial barriers and to take part in local inflammatory response; similar to the IL-1 system with which it shares the coreceptor IL1RAP. Seems to be involved in skin inflammatory response by acting on keratinocytes, dendritic cells and indirectly on T-cells to drive tissue infiltration, cell maturation and cell proliferation. In cultured keratinocytes induces the expression of macrophage, T-cell, and neutrophil chemokines, such as CCL3, CCL4, CCL5, CCL2, CCL17, CCL22, CL20, CCL5, CCL2, CCL17, CCL22, CXCL8, CCL20 and CXCL1; also stimulates its own expression and that of the prototypic cutaneous pro-inflammatory parameters TNF-alpha, S100A7/psoriasin and inducible NOS. May play a role in pro-inflammatory responses during particular neutrophilic airway inflammation: activates mitogen-activated protein kinases and NF-kappa B in primary lung fibroblasts, and stimulates the expression of IL-8 and CXCL3 and Th17 chemokine CCL20 in lung fibroblasts. May be involved in the innate immune response to fungal pathogens, such as Aspergillus fumigatus. This Homo sapiens (Human) protein is Interleukin-36 gamma.